Reading from the N-terminus, the 132-residue chain is Ribosome-binding factor A (132 aa).

It belongs to the RbfA family. Monomer. Binds 30S ribosomal subunits, but not 50S ribosomal subunits or 70S ribosomes.

Its subcellular location is the cytoplasm. Functionally, one of several proteins that assist in the late maturation steps of the functional core of the 30S ribosomal subunit. Associates with free 30S ribosomal subunits (but not with 30S subunits that are part of 70S ribosomes or polysomes). Required for efficient processing of 16S rRNA. May interact with the 5'-terminal helix region of 16S rRNA. The protein is Ribosome-binding factor A of Pectobacterium carotovorum subsp. carotovorum (strain PC1).